Consider the following 487-residue polypeptide: Serine/threonine-protein kinase 4 (487 aa).

Residue Met-1 is modified to N-acetylmethionine. Thr-3 carries the post-translational modification Phosphothreonine. The Protein kinase domain occupies 30 to 281; the sequence is FDVLEKLGEG…ATQLLQHPFV (252 aa). ATP contacts are provided by residues 36–44 and Lys-59; that span reads LGEGSYGSV. Asp-149 serves as the catalytic Proton acceptor. Position 183 is a phosphothreonine; by autocatalysis (Thr-183). Position 265 is a phosphoserine (Ser-265). A coiled-coil region spans residues 290 to 310; sequence LRDLINEAMDVKLKRQESQQR. Residues 303 to 312 are compositionally biased toward basic and acidic residues; it reads KRQESQQREV. Residues 303-332 form a disordered region; it reads KRQESQQREVDQDDEENSEEDEMDSGTMVR. Residues 313-326 are compositionally biased toward acidic residues; sequence DQDDEENSEEDEMD. At Ser-320 the chain carries Phosphoserine. Thr-340 and Thr-367 each carry phosphothreonine. Thr-387 carries the phosphothreonine; by PKB/AKT1 modification. A phosphoserine mark is found at Ser-410 and Ser-414. Tyr-433 is modified (phosphotyrosine). Residues 433 to 480 enclose the SARAH domain; the sequence is YEFLKSWTVEDLQKRLLALDPMMEQEIEEIRQKYQSKRQPILDAIEAK.

This sequence belongs to the protein kinase superfamily. STE Ser/Thr protein kinase family. STE20 subfamily. Homodimer; mediated via the coiled-coil region. Interacts with NORE1, which inhibits autoactivation. Interacts with and stabilizes SAV1. Interacts with RASSF1. Interacts with FOXO3. Interacts with RASSF2 (via SARAH domain). Interacts with AR, PKB/AKT1, TNNI3 and SIRT1. Interacts with DLG5 (via PDZ domain 3). Interacts with MARK3 and SCRIB in the presence of DLG5. Mg(2+) serves as cofactor. Post-translationally, autophosphorylated on serine and threonine residues. Phosphorylation at Thr-387 by PKB/AKT1, leads to inhibition of its: kinase activity, nuclear translocation and autophosphorylation at Thr-183. It also diminishes its cleavage by caspases and its ability to phosphorylate FOXO3. In terms of processing, proteolytically cleaved by caspase-3 during apoptosis at Asp-326 and Asp-349 resulting in a 37 kDa or a 39 kDa subunit respectively. The 39 kDa subunit is further cleaved into the 37 kDa form. Proteolytic cleavage results in kinase activation and nuclear translocation of the truncated form (MST1/N). It is less likely that cleavage at Asp-349 is a prerequisite for activation as this site is not conserved in the murine ortholog.

The protein resides in the cytoplasm. It localises to the nucleus. The enzyme catalyses L-seryl-[protein] + ATP = O-phospho-L-seryl-[protein] + ADP + H(+). It carries out the reaction L-threonyl-[protein] + ATP = O-phospho-L-threonyl-[protein] + ADP + H(+). Inhibited by the C-terminal non-catalytic region. Activated by caspase-cleavage. Full activation also requires homodimerization and autophosphorylation of Thr-183. Activated by RASSF1 which acts by preventing its dephosphorylation. Functionally, stress-activated, pro-apoptotic kinase which, following caspase-cleavage, enters the nucleus and induces chromatin condensation followed by internucleosomal DNA fragmentation. Key component of the Hippo signaling pathway which plays a pivotal role in organ size control and tumor suppression by restricting proliferation and promoting apoptosis. The core of this pathway is composed of a kinase cascade wherein STK3/MST2 and STK4/MST1, in complex with its regulatory protein SAV1, phosphorylates and activates LATS1/2 in complex with its regulatory protein MOB1, which in turn phosphorylates and inactivates YAP1 oncoprotein and WWTR1/TAZ. Phosphorylation of YAP1 by LATS2 inhibits its translocation into the nucleus to regulate cellular genes important for cell proliferation, cell death, and cell migration. STK3/MST2 and STK4/MST1 are required to repress proliferation of mature hepatocytes, to prevent activation of facultative adult liver stem cells (oval cells), and to inhibit tumor formation. Phosphorylates 'Ser-14' of histone H2B (H2BS14ph) during apoptosis. Phosphorylates FOXO3 upon oxidative stress, which results in its nuclear translocation and cell death initiation. Phosphorylates MOBKL1A, MOBKL1B and RASSF2. Phosphorylates TNNI3 (cardiac Tn-I) and alters its binding affinity to TNNC1 (cardiac Tn-C) and TNNT2 (cardiac Tn-T). Phosphorylates FOXO1 on 'Ser-212' and regulates its activation and stimulates transcription of PMAIP1 in a FOXO1-dependent manner. Phosphorylates SIRT1 and inhibits SIRT1-mediated p53/TP53 deacetylation, thereby promoting p53/TP53 dependent transcription and apoptosis upon DNA damage. Acts as an inhibitor of PKB/AKT1. Phosphorylates AR on 'Ser-650' and suppresses its activity by intersecting with PKB/AKT1 signaling and antagonizing formation of AR-chromatin complexes. The chain is Serine/threonine-protein kinase 4 (STK4) from Papio anubis (Olive baboon).